Consider the following 285-residue polypeptide: Transcription factor JAMYB (285 aa).

HTH myb-type domains follow at residues Ser26–Leu78 and Arg79–Ala133. DNA-binding regions (H-T-H motif) lie at residues Trp54–Leu78 and Trp106–Val129.

The protein resides in the nucleus. Its function is as follows. Probable transcription factor that may be involved in the jasmonate-dependent defense responses to the rice blast fungus Magnaporthe oryzae. Does not seem to function in the salicylic acid-dependent signaling pathway. The polypeptide is Transcription factor JAMYB (Oryza sativa subsp. japonica (Rice)).